Here is a 310-residue protein sequence, read N- to C-terminus: Upstream stimulatory factor 1 (310 aa).

The segment covering 1-17 has biased composition (polar residues); sequence MKGQQKTAETEEGTVQI. 2 disordered regions span residues 1–26 and 171–209; these read MKGQ…ATGE and QGGS…EVER. Basic and acidic residues predominate over residues 190–209; that stretch reads EAPRTTRDEKRRAQHNEVER. The region spanning 199–254 is the bHLH domain; that stretch reads KRRAQHNEVERRRRDKINNWIVQLSKIIPDCSMESTKSGQSKGGILSKACDYIQEL. Residues 271-292 are leucine-zipper; it reads LQLDNDVLRQQVEDLKNKNLLL. K306 participates in a covalent cross-link: Glycyl lysine isopeptide (Lys-Gly) (interchain with G-Cter in SUMO2).

In terms of assembly, efficient DNA binding requires dimerization with another bHLH protein. Binds DNA as a homodimer or a heterodimer (USF1/USF2). Interacts with varicella-zoster virus IE62 protein.

The protein resides in the nucleus. Transcription factor that binds to a symmetrical DNA sequence (E-boxes) (5'-CACGTG-3') that is found in a variety of viral and cellular promoters. The protein is Upstream stimulatory factor 1 (USF1) of Homo sapiens (Human).